Consider the following 177-residue polypeptide: Alkyl hydroperoxide reductase AhpD (177 aa).

The active-site Proton donor is cysteine 130. Cysteine 130 and cysteine 133 are joined by a disulfide. Cysteine 133 acts as the Cysteine sulfenic acid (-SOH) intermediate in catalysis.

It belongs to the AhpD family. In terms of assembly, homotrimer.

It carries out the reaction N(6)-[(R)-dihydrolipoyl]-L-lysyl-[lipoyl-carrier protein] + a hydroperoxide = N(6)-[(R)-lipoyl]-L-lysyl-[lipoyl-carrier protein] + an alcohol + H2O. Antioxidant protein with alkyl hydroperoxidase activity. Required for the reduction of the AhpC active site cysteine residues and for the regeneration of the AhpC enzyme activity. In Corynebacterium aurimucosum (strain ATCC 700975 / DSM 44827 / CIP 107346 / CN-1) (Corynebacterium nigricans), this protein is Alkyl hydroperoxide reductase AhpD.